A 218-amino-acid polypeptide reads, in one-letter code: Ribose-5-phosphate isomerase A (218 aa).

Residues 28-31, 81-84, and 94-97 contribute to the substrate site; these read TGST, DGAD, and KGGG. The Proton acceptor role is filled by E103. Residue K121 participates in substrate binding.

This sequence belongs to the ribose 5-phosphate isomerase family. In terms of assembly, homodimer.

The catalysed reaction is aldehydo-D-ribose 5-phosphate = D-ribulose 5-phosphate. It participates in carbohydrate degradation; pentose phosphate pathway; D-ribose 5-phosphate from D-ribulose 5-phosphate (non-oxidative stage): step 1/1. Functionally, catalyzes the reversible conversion of ribose-5-phosphate to ribulose 5-phosphate. This Vibrio cholerae serotype O1 (strain ATCC 39541 / Classical Ogawa 395 / O395) protein is Ribose-5-phosphate isomerase A.